The following is a 631-amino-acid chain: tRNA 5-methylaminomethyl-2-thiouridine biosynthesis bifunctional protein MnmC (631 aa).

The interval 1–243 (MITDLRPPAM…KREMLTGRLP (243 aa)) is tRNA (mnm(5)s(2)U34)-methyltransferase. Residues 261-631 (IGAGIAGAAL…GRLYRNQLTV (371 aa)) are FAD-dependent cmnm(5)s(2)U34 oxidoreductase.

The protein in the N-terminal section; belongs to the methyltransferase superfamily. tRNA (mnm(5)s(2)U34)-methyltransferase family. In the C-terminal section; belongs to the DAO family. The cofactor is FAD.

The protein resides in the cytoplasm. The catalysed reaction is 5-aminomethyl-2-thiouridine(34) in tRNA + S-adenosyl-L-methionine = 5-methylaminomethyl-2-thiouridine(34) in tRNA + S-adenosyl-L-homocysteine + H(+). Catalyzes the last two steps in the biosynthesis of 5-methylaminomethyl-2-thiouridine (mnm(5)s(2)U) at the wobble position (U34) in tRNA. Catalyzes the FAD-dependent demodification of cmnm(5)s(2)U34 to nm(5)s(2)U34, followed by the transfer of a methyl group from S-adenosyl-L-methionine to nm(5)s(2)U34, to form mnm(5)s(2)U34. The polypeptide is tRNA 5-methylaminomethyl-2-thiouridine biosynthesis bifunctional protein MnmC (Marinobacter nauticus (strain ATCC 700491 / DSM 11845 / VT8) (Marinobacter aquaeolei)).